The sequence spans 493 residues: Putative lon protease homolog (493 aa).

52–59 (GPPGVGKS) contributes to the ATP binding site.

It belongs to the peptidase S16 family.

The protein is Putative lon protease homolog of Thermoplasma acidophilum (strain ATCC 25905 / DSM 1728 / JCM 9062 / NBRC 15155 / AMRC-C165).